A 103-amino-acid polypeptide reads, in one-letter code: Large ribosomal subunit protein uL24 (103 aa).

It belongs to the universal ribosomal protein uL24 family. Part of the 50S ribosomal subunit.

Functionally, one of two assembly initiator proteins, it binds directly to the 5'-end of the 23S rRNA, where it nucleates assembly of the 50S subunit. In terms of biological role, one of the proteins that surrounds the polypeptide exit tunnel on the outside of the subunit. This chain is Large ribosomal subunit protein uL24, found in Lachnospira eligens (strain ATCC 27750 / DSM 3376 / VPI C15-48 / C15-B4) (Eubacterium eligens).